The chain runs to 633 residues: Leucine-rich repeat and IQ domain-containing protein 3 (633 aa).

LRR repeat units lie at residues 51–72 (SLRVCIFSNNFVTDIQPLQGCK), 73–94 (KLIKLDLHGNQIKTLPDRTFWN), and 98–119 (NLKLLYLHDNGFAKLKNICVLS). Positions 132-179 (CPVSLKKGYRHVLVNSIWPLKALDHHVISDEEIIQNWHLPERFKTFSQ) constitute an LRRCT domain. An IQ domain is found at 215 to 244 (HNSPVLIIQRWIRGFIVRKHLSPYFTRKRH). The tract at residues 322-343 (NSKQPRHHIQKGQNEMKSDSED) is disordered. Positions 556–616 (EKREKRKYKQ…AKVEFINTYY (61 aa)) form a coiled coil.

In Rattus norvegicus (Rat), this protein is Leucine-rich repeat and IQ domain-containing protein 3 (Lrriq3).